The sequence spans 451 residues: Probable glycine dehydrogenase (decarboxylating) subunit 1 (451 aa).

This sequence belongs to the GcvP family. N-terminal subunit subfamily. In terms of assembly, the glycine cleavage system is composed of four proteins: P, T, L and H. In this organism, the P 'protein' is a heterodimer of two subunits.

It catalyses the reaction N(6)-[(R)-lipoyl]-L-lysyl-[glycine-cleavage complex H protein] + glycine + H(+) = N(6)-[(R)-S(8)-aminomethyldihydrolipoyl]-L-lysyl-[glycine-cleavage complex H protein] + CO2. Its function is as follows. The glycine cleavage system catalyzes the degradation of glycine. The P protein binds the alpha-amino group of glycine through its pyridoxal phosphate cofactor; CO(2) is released and the remaining methylamine moiety is then transferred to the lipoamide cofactor of the H protein. This Thermococcus kodakarensis (strain ATCC BAA-918 / JCM 12380 / KOD1) (Pyrococcus kodakaraensis (strain KOD1)) protein is Probable glycine dehydrogenase (decarboxylating) subunit 1.